The following is a 403-amino-acid chain: Signal-transducing adaptor protein 2 (403 aa).

The region spanning 18–130 (PSHYYESFLE…VPTDLTLLPG (113 aa)) is the PH domain. Residue Tyr-22 is modified to Phosphotyrosine; by SRC. The 116-residue stretch at 133–248 (YMMSEVLAKE…KALVPFLLDE (116 aa)) folds into the SH2 domain. At Tyr-250 the chain carries Phosphotyrosine; by PTK6. A disordered region spans residues 270–308 (APSAPGPGPAPCTGGPKPLSPASSQDKLPPLPPLPNQEE). Tyr-310 is subject to Phosphotyrosine. The residue at position 322 (Tyr-322) is a Phosphotyrosine; by SRC. The tract at residues 331-374 (SWPVILKPKKLPKPPAKLPKPPVGPKPEPKVFNGGLGRKLPVSS) is disordered. The segment covering 343 to 356 (KPPAKLPKPPVGPK) has biased composition (pro residues). A coiled-coil region spans residues 382–402 (AGLADMTAELQKKLEKRRALE).

In terms of assembly, interacts with PTK6 and CSF1R. Post-translationally, phosphorylated on tyrosine. Tyr-250 may be important for interaction with kinases. Phosphorylated by PTK6 at Tyr-250 modulates PTK6-mediated STAT3 activation. Tyr-22 and Tyr-322 appears to be phosphorylated by SRC. Widely expressed.

It is found in the cytoplasm. Substrate of protein kinase PTK6. May play a regulatory role in the acute-phase response in systemic inflammation and may modulate STAT3 activity. In Homo sapiens (Human), this protein is Signal-transducing adaptor protein 2 (STAP2).